Consider the following 398-residue polypeptide: Argininosuccinate synthase (398 aa).

9 to 17 (AYSGGLDTS) contributes to the ATP binding site. Residue Tyr-85 participates in L-citrulline binding. Gly-115 serves as a coordination point for ATP. Thr-117, Asn-121, and Asp-122 together coordinate L-aspartate. Residue Asn-121 coordinates L-citrulline. L-citrulline-binding residues include Arg-125, Ser-173, Glu-258, and Tyr-270.

It belongs to the argininosuccinate synthase family. Type 1 subfamily. Homotetramer.

It is found in the cytoplasm. The enzyme catalyses L-citrulline + L-aspartate + ATP = 2-(N(omega)-L-arginino)succinate + AMP + diphosphate + H(+). It functions in the pathway amino-acid biosynthesis; L-arginine biosynthesis; L-arginine from L-ornithine and carbamoyl phosphate: step 2/3. In Streptococcus pneumoniae (strain Hungary19A-6), this protein is Argininosuccinate synthase.